A 338-amino-acid chain; its full sequence is Methionine import ATP-binding protein MetN 1 (338 aa).

Residues 2-241 (IEVRSVTKRF…PHSELGVGLL (240 aa)) form the ABC transporter domain. ATP is bound at residue 38–45 (GQSGAGKT).

This sequence belongs to the ABC transporter superfamily. Methionine importer (TC 3.A.1.24) family. In terms of assembly, the complex is composed of two ATP-binding proteins (MetN), two transmembrane proteins (MetI) and a solute-binding protein (MetQ).

The protein resides in the cell membrane. It carries out the reaction L-methionine(out) + ATP + H2O = L-methionine(in) + ADP + phosphate + H(+). It catalyses the reaction D-methionine(out) + ATP + H2O = D-methionine(in) + ADP + phosphate + H(+). Part of the ABC transporter complex MetNIQ involved in methionine import. Responsible for energy coupling to the transport system. This is Methionine import ATP-binding protein MetN 1 from Rhodococcus jostii (strain RHA1).